Here is a 62-residue protein sequence, read N- to C-terminus: Large ribosomal subunit protein bL33 (62 aa).

Belongs to the bacterial ribosomal protein bL33 family.

The polypeptide is Large ribosomal subunit protein bL33 (Azobacteroides pseudotrichonymphae genomovar. CFP2).